A 471-amino-acid polypeptide reads, in one-letter code: Protoheme IX farnesyltransferase, mitochondrial (471 aa).

Residues 1 to 60 (MLLSNVAVNRTVVHTQLVSGSRSALHALSRTSHSVPVTHTHQRRHIFSHKRRLSSSTLAI) constitute a mitochondrion transit peptide. The next 6 membrane-spanning stretches (helical) occupy residues 188–208 (AVSL…SGSA), 247–267 (ITGT…VAIL), 287–307 (IINT…GWAA), 312–332 (LLHP…FPHF), 368–388 (LLMF…WWFV), and 430–450 (KLFW…MIHK).

It belongs to the UbiA prenyltransferase family.

The protein resides in the mitochondrion membrane. It carries out the reaction heme b + (2E,6E)-farnesyl diphosphate + H2O = Fe(II)-heme o + diphosphate. Converts protoheme IX and farnesyl diphosphate to heme O. The sequence is that of Protoheme IX farnesyltransferase, mitochondrial (COX10) from Yarrowia lipolytica (strain CLIB 122 / E 150) (Yeast).